The chain runs to 116 residues: NADPH-dependent 7-cyano-7-deazaguanine reductase (116 aa).

Catalysis depends on Cys31, which acts as the Thioimide intermediate. The Proton donor role is filled by Asp38. Substrate-binding positions include 53–55 and 72–73; these read IEL and YE.

Belongs to the GTP cyclohydrolase I family. QueF type 1 subfamily.

It is found in the cytoplasm. It catalyses the reaction 7-aminomethyl-7-carbaguanine + 2 NADP(+) = 7-cyano-7-deazaguanine + 2 NADPH + 3 H(+). Its pathway is tRNA modification; tRNA-queuosine biosynthesis. Functionally, catalyzes the NADPH-dependent reduction of 7-cyano-7-deazaguanine (preQ0) to 7-aminomethyl-7-deazaguanine (preQ1). The protein is NADPH-dependent 7-cyano-7-deazaguanine reductase of Chlorobium luteolum (strain DSM 273 / BCRC 81028 / 2530) (Pelodictyon luteolum).